A 137-amino-acid chain; its full sequence is Large ribosomal subunit protein uL16 (137 aa).

The protein belongs to the universal ribosomal protein uL16 family. As to quaternary structure, part of the 50S ribosomal subunit.

Functionally, binds 23S rRNA and is also seen to make contacts with the A and possibly P site tRNAs. The chain is Large ribosomal subunit protein uL16 from Anaplasma phagocytophilum (strain HZ).